We begin with the raw amino-acid sequence, 185 residues long: Peptidyl-tRNA hydrolase (185 aa).

A tRNA-binding site is contributed by Tyr14. His19 serves as the catalytic Proton acceptor. TRNA-binding residues include Phe64, Asn66, and Asn112.

It belongs to the PTH family. In terms of assembly, monomer.

It is found in the cytoplasm. It carries out the reaction an N-acyl-L-alpha-aminoacyl-tRNA + H2O = an N-acyl-L-amino acid + a tRNA + H(+). Its function is as follows. Hydrolyzes ribosome-free peptidyl-tRNAs (with 1 or more amino acids incorporated), which drop off the ribosome during protein synthesis, or as a result of ribosome stalling. In terms of biological role, catalyzes the release of premature peptidyl moieties from peptidyl-tRNA molecules trapped in stalled 50S ribosomal subunits, and thus maintains levels of free tRNAs and 50S ribosomes. This chain is Peptidyl-tRNA hydrolase, found in Latilactobacillus sakei subsp. sakei (strain 23K) (Lactobacillus sakei subsp. sakei).